Here is a 432-residue protein sequence, read N- to C-terminus: D-amino acid dehydrogenase 1 (432 aa).

3-17 (VLILGSGVVGTVSAY) contacts FAD.

The protein belongs to the DadA oxidoreductase family. It depends on FAD as a cofactor.

The enzyme catalyses a D-alpha-amino acid + A + H2O = a 2-oxocarboxylate + AH2 + NH4(+). Functionally, oxidative deamination of D-amino acids. This Pseudomonas putida (strain ATCC 47054 / DSM 6125 / CFBP 8728 / NCIMB 11950 / KT2440) protein is D-amino acid dehydrogenase 1 (dadA1).